Reading from the N-terminus, the 64-residue chain is Disintegrin VLO5A (64 aa).

A Disintegrin domain is found at 1 to 64 (NSGNPCCDPV…SDCPRNPYKD (64 aa)). Disulfide bonds link cysteine 6–cysteine 29, cysteine 20–cysteine 26, cysteine 25–cysteine 50, and cysteine 38–cysteine 57. The Cell attachment site; atypical (VGD) motif lies at 42–44 (VGD).

The protein belongs to the venom metalloproteinase (M12B) family. P-II subfamily. P-IIe sub-subfamily. Heterodimer with VLO5B; disulfide-linked. As to expression, expressed by the venom gland.

The protein localises to the secreted. Its function is as follows. Poor inhibitor of platelet aggregation. The disintegrin inhibits the adhesion of the alpha-4/beta-1 (ITGA4/ITGB1) integrin to VCAM-1. Inhibition on alpha-IIb/beta-3 (ITGA2B/ITGB3) is low. This is Disintegrin VLO5A from Macrovipera lebetina obtusa (Levant blunt-nosed viper).